The chain runs to 50 residues: Large ribosomal subunit protein eL39 (50 aa).

The protein belongs to the eukaryotic ribosomal protein eL39 family.

This chain is Large ribosomal subunit protein eL39 (rpl39e), found in Archaeoglobus fulgidus (strain ATCC 49558 / DSM 4304 / JCM 9628 / NBRC 100126 / VC-16).